Reading from the N-terminus, the 200-residue chain is Transcription elongation factor A protein-like 3 (200 aa).

The disordered stretch occupies residues 1–200 (MEKPYNKNEG…QRGLHDIPYL (200 aa)). Positions 20 to 36 (DEVEPDDEGKSDEEEKP) are enriched in acidic residues. The residue at position 30 (Ser-30) is a Phosphoserine. Residues 37–50 (DVEGKTECEGKRED) are compositionally biased toward basic and acidic residues. The segment covering 51–64 (EGEPGDEGQLEDEG) has biased composition (acidic residues). Ser-65 carries the phosphoserine modification. Composition is skewed to basic and acidic residues over residues 65–80 (SQEKQGRSEGEGKPQG), 96–107 (AAEKRPAEDYVP), and 115–154 (DRGTDDSPKDSQEDLQERHLSSEEMMRECGDVSRAQEELR).

It belongs to the TFS-II family. TFA subfamily.

The protein resides in the nucleus. Functionally, may be involved in transcriptional regulation. This is Transcription elongation factor A protein-like 3 (TCEAL3) from Homo sapiens (Human).